We begin with the raw amino-acid sequence, 306 residues long: NADH-cytochrome b5 reductase 2-B (306 aa).

The chain crosses the membrane as a helical span at residues 12-32; it reads PLLLSSGIAVTAAAAVYFSTG. One can recognise an FAD-binding FR-type domain in the interval 53 to 157; sequence STWVDLPLVK…TGPIVKYEWK (105 aa). FAD is bound at residue 160-195; it reads KFDSVTLLGAGSGITPLYQLMGSILSNPEDKTKINL.

This sequence belongs to the flavoprotein pyridine nucleotide cytochrome reductase family. FAD serves as cofactor.

It localises to the mitochondrion outer membrane. The catalysed reaction is 2 Fe(III)-[cytochrome b5] + NADH = 2 Fe(II)-[cytochrome b5] + NAD(+) + H(+). Its function is as follows. May mediate the reduction of outer membrane cytochrome b5. This Vanderwaltozyma polyspora (strain ATCC 22028 / DSM 70294 / BCRC 21397 / CBS 2163 / NBRC 10782 / NRRL Y-8283 / UCD 57-17) (Kluyveromyces polysporus) protein is NADH-cytochrome b5 reductase 2-B (MCR1B).